The following is a 274-amino-acid chain: Shikimate dehydrogenase (NADP(+)) (274 aa).

Residues 14 to 16 (SQS) and T61 contribute to the shikimate site. The Proton acceptor role is filled by K65. Residues N86 and D102 each contribute to the shikimate site. NADP(+) contacts are provided by residues 128 to 132 (GAGGA), 151 to 156 (NRTVEK), and L215. Y217 is a binding site for shikimate. G239 provides a ligand contact to NADP(+).

Belongs to the shikimate dehydrogenase family. In terms of assembly, homodimer.

It carries out the reaction shikimate + NADP(+) = 3-dehydroshikimate + NADPH + H(+). The protein operates within metabolic intermediate biosynthesis; chorismate biosynthesis; chorismate from D-erythrose 4-phosphate and phosphoenolpyruvate: step 4/7. In terms of biological role, involved in the biosynthesis of the chorismate, which leads to the biosynthesis of aromatic amino acids. Catalyzes the reversible NADPH linked reduction of 3-dehydroshikimate (DHSA) to yield shikimate (SA). The chain is Shikimate dehydrogenase (NADP(+)) from Proteus mirabilis (strain HI4320).